Reading from the N-terminus, the 673-residue chain is Protein transport Sec1a (673 aa).

The disordered stretch occupies residues 538–591 (SSHKEESEARTGSVRKSSAPTAVPERKATPHSMRSRRTATWARPHSSDDGYSSD).

The protein belongs to the STXBP/unc-18/SEC1 family. In terms of assembly, does not bind the syntaxin KNOLLE.

Involved in the vesicle trafficking. Binds syntaxins. This Arabidopsis thaliana (Mouse-ear cress) protein is Protein transport Sec1a (SEC1A).